We begin with the raw amino-acid sequence, 479 residues long: Catalase easC (479 aa).

Polar residues predominate over residues M1–G13. The disordered stretch occupies residues M1–T28. H53 is a catalytic residue. A heme-binding site is contributed by Y343. The interval H365 to R385 is disordered.

It belongs to the catalase family. Heme serves as cofactor.

It functions in the pathway alkaloid biosynthesis; ergot alkaloid biosynthesis. Functionally, catalase; part of the gene cluster that mediates the biosynthesis of fungal ergot alkaloid. DmaW catalyzes the first step of ergot alkaloid biosynthesis by condensing dimethylallyl diphosphate (DMAP) and tryptophan to form 4-dimethylallyl-L-tryptophan. The second step is catalyzed by the methyltransferase easF that methylates 4-dimethylallyl-L-tryptophan in the presence of S-adenosyl-L-methionine, resulting in the formation of 4-dimethylallyl-L-abrine. The catalase easC and the FAD-dependent oxidoreductase easE then transform 4-dimethylallyl-L-abrine to chanoclavine-I which is further oxidized by easD in the presence of NAD(+), resulting in the formation of chanoclavine-I aldehyde. Agroclavine dehydrogenase easG then mediates the conversion of chanoclavine-I aldehyde to agroclavine via a non-enzymatic adduct reaction: the substrate is an iminium intermediate that is formed spontaneously from chanoclavine-I aldehyde in the presence of glutathione. Further conversion of agroclavine to paspalic acid is a two-step process involving oxidation of agroclavine to elymoclavine and of elymoclavine to paspalic acid, the second step being performed by the elymoclavine oxidase cloA. However, cloA does not encode a functional enzyme indicating that C.fusiformis terminates its ergot alkaloid pathway at elymoclavine. This is Catalase easC from Claviceps fusiformis (Ergot fungus).